The chain runs to 146 residues: MVIFSSYFSKQMNRFSTPFVFFFKKLNNTLKKSLQFIMRFHSYHPMFICLLRDSSRNENRKKKVSIGLRTIMRAFSFLMQVATCLIRYSLILTCLVAILLSVLWRIQFAALRMHDLIEEELKMFVLQHNCTLADLWSGKCPSSEDE.

A helical transmembrane segment spans residues Leu-85–Trp-104.

The protein localises to the cytoplasm. It localises to the membrane. Functionally, has a role in meiosis. The protein is Meiotically up-regulated gene 96 protein (mug96) of Schizosaccharomyces pombe (strain 972 / ATCC 24843) (Fission yeast).